A 1058-amino-acid chain; its full sequence is Carbamoyl phosphate synthase large chain (1058 aa).

Residues 1 to 401 (MSKRKDIQKI…SLLKACRSLE (401 aa)) form a carboxyphosphate synthetic domain region. R129, R169, G175, G176, R208, I210, E215, G241, I242, H243, Q284, and E298 together coordinate ATP. The 195-residue stretch at 133-327 (KQLMQELDQP…IAKLAAKIAV (195 aa)) folds into the ATP-grasp 1 domain. Q284, E298, and N300 together coordinate Mg(2+). Mn(2+)-binding residues include Q284, E298, and N300. The segment at 402–546 (IGVCHNEMTS…YSTYELENES (145 aa)) is oligomerization domain. The tract at residues 547–929 (VQSNKESILV…ALYKAFEANN (383 aa)) is carbamoyl phosphate synthetic domain. The ATP-grasp 2 domain occupies 671 to 861 (EKALKELGIP…MAQIATKLIL (191 aa)). 10 residues coordinate ATP: R707, S746, I748, E752, G777, V778, H779, S780, Q820, and E832. Mg(2+)-binding residues include Q820, E832, and N834. Positions 820, 832, and 834 each coordinate Mn(2+). Positions 930–1058 (SHLSEFGQIV…ESRCFNIEAI (129 aa)) constitute an MGS-like domain. The tract at residues 930-1058 (SHLSEFGQIV…ESRCFNIEAI (129 aa)) is allosteric domain.

The protein belongs to the CarB family. In terms of assembly, composed of two chains; the small (or glutamine) chain promotes the hydrolysis of glutamine to ammonia, which is used by the large (or ammonia) chain to synthesize carbamoyl phosphate. Tetramer of heterodimers (alpha,beta)4. Mg(2+) serves as cofactor. Requires Mn(2+) as cofactor.

The enzyme catalyses hydrogencarbonate + L-glutamine + 2 ATP + H2O = carbamoyl phosphate + L-glutamate + 2 ADP + phosphate + 2 H(+). The catalysed reaction is hydrogencarbonate + NH4(+) + 2 ATP = carbamoyl phosphate + 2 ADP + phosphate + 2 H(+). It functions in the pathway amino-acid biosynthesis; L-arginine biosynthesis; carbamoyl phosphate from bicarbonate: step 1/1. The protein operates within pyrimidine metabolism; UMP biosynthesis via de novo pathway; (S)-dihydroorotate from bicarbonate: step 1/3. In terms of biological role, large subunit of the glutamine-dependent carbamoyl phosphate synthetase (CPSase). CPSase catalyzes the formation of carbamoyl phosphate from the ammonia moiety of glutamine, carbonate, and phosphate donated by ATP, constituting the first step of 2 biosynthetic pathways, one leading to arginine and/or urea and the other to pyrimidine nucleotides. The large subunit (synthetase) binds the substrates ammonia (free or transferred from glutamine from the small subunit), hydrogencarbonate and ATP and carries out an ATP-coupled ligase reaction, activating hydrogencarbonate by forming carboxy phosphate which reacts with ammonia to form carbamoyl phosphate. This Streptococcus pyogenes serotype M5 (strain Manfredo) protein is Carbamoyl phosphate synthase large chain.